The following is a 355-amino-acid chain: Peptide chain release factor 1 (355 aa).

An N5-methylglutamine modification is found at Gln-233.

The protein belongs to the prokaryotic/mitochondrial release factor family. Post-translationally, methylated by PrmC. Methylation increases the termination efficiency of RF1.

The protein localises to the cytoplasm. In terms of biological role, peptide chain release factor 1 directs the termination of translation in response to the peptide chain termination codons UAG and UAA. The polypeptide is Peptide chain release factor 1 (Caldicellulosiruptor saccharolyticus (strain ATCC 43494 / DSM 8903 / Tp8T 6331)).